A 314-amino-acid chain; its full sequence is Protein YdgH (314 aa).

Residues 1 to 19 (MKLKNTLLASALLSAMAFS) form the signal peptide.

It to E.coli YjfY.

This Escherichia coli (strain K12) protein is Protein YdgH (ydgH).